A 165-amino-acid polypeptide reads, in one-letter code: Protein SprT (165 aa).

A SprT-like domain is found at E20–V163. H78 serves as a coordination point for Zn(2+). The active site involves E79. H82 provides a ligand contact to Zn(2+).

It belongs to the SprT family. The cofactor is Zn(2+).

Its subcellular location is the cytoplasm. This Salmonella arizonae (strain ATCC BAA-731 / CDC346-86 / RSK2980) protein is Protein SprT.